The following is a 147-amino-acid chain: Putative cystatin-9-like protein CST9LP1 (147 aa).

Residues 1–28 form the signal peptide; that stretch reads MWSLPPSRALSCAPLLLLFSFQFLVTYA. A disulfide bond links C98 and C108. N117 and N139 each carry an N-linked (GlcNAc...) asparagine glycan. An intrachain disulfide couples C122 to C142.

This sequence belongs to the cystatin family.

It is found in the secreted. The sequence is that of Putative cystatin-9-like protein CST9LP1 (CST9LP1) from Homo sapiens (Human).